We begin with the raw amino-acid sequence, 430 residues long: Trigger factor (430 aa).

The 86-residue stretch at 157-242 (GDLVALETWS…AVEVSEPVLP (86 aa)) folds into the PPIase FKBP-type domain.

It belongs to the FKBP-type PPIase family. Tig subfamily.

It is found in the cytoplasm. It catalyses the reaction [protein]-peptidylproline (omega=180) = [protein]-peptidylproline (omega=0). In terms of biological role, involved in protein export. Acts as a chaperone by maintaining the newly synthesized protein in an open conformation. Functions as a peptidyl-prolyl cis-trans isomerase. The polypeptide is Trigger factor (Xanthomonas oryzae pv. oryzae (strain MAFF 311018)).